The chain runs to 79 residues: Hematopoietic cell signal transducer (79 aa).

The signal sequence occupies residues 1–18 (MVPPGNILFLLLLPVATA). The Extracellular portion of the chain corresponds to 19–35 (QMTPGSCSGCGPLSLPL). A helical transmembrane segment spans residues 36-56 (LAGLVAADAVVSLLIVVVVFV). The Cytoplasmic segment spans residues 57 to 79 (CARLRSRPTQEDDKIYINMPGRG). Tyr72 carries the phosphotyrosine modification. The interval 72-74 (YIN) is GRB2 binding site. The tract at residues 72–75 (YINM) is PIK3R1 binding site.

It belongs to the DAP10 family. In terms of assembly, homodimer; Disulfide-linked. Heterohexamer composed of four subunits of HCST/DAP10 and two subunits of KLRK1. Interacts (via transmembrane domain) with KLRK1 (via transmembrane domain); the interaction is required for KLRK1 NK cell surface and induces NK cell-mediated cytotoxicity. Interacts with PIK3R1 and GRB2. Interacts with CLEC5A. Forms an CLEC5A/TYROBP/HCST trimolecular complex depending almost solely on TYROBP. Interacts with KLRK1. Interacts with CD300H. Post-translationally, phosphorylated; PIK3R1 and GRB2 associate specifically with tyrosine-phosphorylated HCST. O-glycosylated.

Its subcellular location is the membrane. Transmembrane adapter protein which associates with KLRK1 to form an activation receptor KLRK1-HCST in lymphoid and myeloid cells; this receptor plays a major role in triggering cytotoxicity against target cells expressing cell surface ligands such as MHC class I chain-related MICA and MICB, and UL16-binding proteins (ULBPs); these ligands are up-regulated by stress conditions and pathological state such as viral infection and tumor transformation. Functions as a docking site for PI3-kinase PIK3R1 and GRB2. Interaction of ULBPs with KLRK1-HCST triggers calcium mobilization and activation of the PIK3R1, MAP2K/ERK, and JAK2/STAT5 signaling pathways. Both PIK3R1 and GRB2 are required for full KLRK1-HCST-mediated activation and ultimate killing of target cells. In NK cells, KLRK1-HCST signaling directly induces cytotoxicity and enhances cytokine production initiated via DAP12/TYROBP-associated receptors. In T-cells, it provides primarily costimulation for TCR-induced signals. KLRK1-HCST receptor plays a role in immune surveillance against tumors and is required for cytolysis of tumors cells; indeed, melanoma cells that do not express KLRK1 ligands escape from immune surveillance mediated by NK cells. This is Hematopoietic cell signal transducer (HCST) from Bos taurus (Bovine).